The sequence spans 458 residues: Transmembrane protein 135 (458 aa).

Transmembrane regions (helical) follow at residues 68–88 (ILQS…FFCI), 96–116 (FYLW…AILV), 149–169 (TLRN…MFFF), 298–318 (FQLG…SCFL), 331–351 (IIAG…TISM), and 380–400 (IIYS…VQTL).

Belongs to the TMEM135 family.

The protein resides in the mitochondrion membrane. It localises to the peroxisome membrane. Functionally, involved in mitochondrial metabolism by regulating the balance between mitochondrial fusion and fission. May act as a regulator of mitochondrial fission that promotes DNM1L-dependent fission through activation of DNM1L. May be involved in peroxisome organization. In Bos taurus (Bovine), this protein is Transmembrane protein 135.